The following is a 659-amino-acid chain: ATP-binding cassette sub-family D member 3 (659 aa).

An interaction with PEX19 region spans residues Met-1–Lys-61. A glycan (N-linked (GlcNAc...) asparagine) is linked at Asn-12. An N6-acetyllysine modification is found at Lys-61. Residues Gly-84–Ile-104 traverse the membrane as a helical segment. The 288-residue stretch at Tyr-85–Gly-372 folds into the ABC transmembrane type-1 domain. The N-linked (GlcNAc...) asparagine glycan is linked to Asn-106. A helical membrane pass occupies residues Leu-126 to Gly-146. N-linked (GlcNAc...) asparagine glycosylation is present at Asn-206. Residues Ala-224 to Leu-244 traverse the membrane as a helical segment. Residue Lys-260 is modified to N6-acetyllysine. The helical transmembrane segment at Met-313–Val-333 threads the bilayer. Residue Lys-399 is modified to N6-acetyllysine. The ABC transporter domain maps to Ile-440–Ser-659. Residue Gly-473 to Ser-480 coordinates ATP. At Lys-533 the chain carries N6-acetyllysine. The residue at position 659 (Ser-659) is a Phosphoserine.

This sequence belongs to the ABC transporter superfamily. ABCD family. Peroxisomal fatty acyl CoA transporter (TC 3.A.1.203) subfamily. In terms of assembly, homodimers. Can form heterodimers with ABCD1 and ABCD2. Dimerization is necessary to form an active transporter. Interacts with PEX19; mediates the targeting of ABCD3 to peroxisomes. Ubiquitinated by PEX2 during pexophagy in response to starvation, leading to its degradation.

The protein resides in the peroxisome membrane. It catalyses the reaction a very long-chain fatty acyl-CoA + H2O = a very long-chain fatty acid + CoA + H(+). The enzyme catalyses a very long-chain fatty acid(in) + ATP + H2O = a very long-chain fatty acid(out) + ADP + phosphate + H(+). The catalysed reaction is a long-chain fatty acyl-CoA + H2O = a long-chain fatty acid + CoA + H(+). It carries out the reaction a long-chain fatty acid(in) + ATP + H2O = a long-chain fatty acid(out) + ADP + phosphate + H(+). It catalyses the reaction pristanoyl-CoA + H2O = 2,6,10,14-tetramethylpentadecanoate + CoA + H(+). The enzyme catalyses 2,6,10,14-tetramethylpentadecanoate(in) + ATP + H2O = 2,6,10,14-tetramethylpentadecanoate(out) + ADP + phosphate + H(+). The catalysed reaction is hexadecanedioyl-CoA + H2O = hexadecanedioate + CoA + H(+). It carries out the reaction hexadecanedioate(in) + ATP + H2O = hexadecanedioate(out) + ADP + phosphate + H(+). It catalyses the reaction (5Z,8Z,11Z,14Z,17Z)-eicosapentaenoyl-CoA + H2O = (5Z,8Z,11Z,14Z,17Z)-eicosapentaenoate + CoA + H(+). The enzyme catalyses (5Z,8Z,11Z,14Z,17Z)-eicosapentaenoate(in) + ATP + H2O = (5Z,8Z,11Z,14Z,17Z)-eicosapentaenoate(out) + ADP + phosphate + H(+). The catalysed reaction is (4Z,7Z,10Z,13Z,16Z,19Z)-docosahexaenoyl-CoA + H2O = (4Z,7Z,10Z,13Z,16Z,19Z)-docosahexaenoate + CoA + H(+). It carries out the reaction (4Z,7Z,10Z,13Z,16Z,19Z)-docosahexaenoate(in) + ATP + H2O = (4Z,7Z,10Z,13Z,16Z,19Z)-docosahexaenoate(out) + ADP + phosphate + H(+). In terms of biological role, broad substrate specificity ATP-dependent transporter of the ATP-binding cassette (ABC) family that catalyzes the transport of long-chain fatty acids (LCFA)-CoA, dicarboxylic acids-CoA, long-branched-chain fatty acids-CoA and bile acids from the cytosol to the peroxisome lumen for beta-oxydation. Has fatty acyl-CoA thioesterase and ATPase activities. Probably hydrolyzes fatty acyl-CoAs into free fatty acids prior to their ATP-dependent transport into peroxisomes. Thus, play a role in regulation of LCFAs and energy metabolism namely, in the degradation and biosynthesis of fatty acids by beta-oxidation. This Homo sapiens (Human) protein is ATP-binding cassette sub-family D member 3.